Reading from the N-terminus, the 449-residue chain is Methylenetetrahydrofolate--tRNA-(uracil-5-)-methyltransferase TrmFO (449 aa).

FAD is bound at residue 10–15; the sequence is GGGLAG.

The protein belongs to the MnmG family. TrmFO subfamily. FAD is required as a cofactor.

The protein localises to the cytoplasm. The enzyme catalyses uridine(54) in tRNA + (6R)-5,10-methylene-5,6,7,8-tetrahydrofolate + NADH + H(+) = 5-methyluridine(54) in tRNA + (6S)-5,6,7,8-tetrahydrofolate + NAD(+). It carries out the reaction uridine(54) in tRNA + (6R)-5,10-methylene-5,6,7,8-tetrahydrofolate + NADPH + H(+) = 5-methyluridine(54) in tRNA + (6S)-5,6,7,8-tetrahydrofolate + NADP(+). Catalyzes the folate-dependent formation of 5-methyl-uridine at position 54 (M-5-U54) in all tRNAs. This Sphingopyxis alaskensis (strain DSM 13593 / LMG 18877 / RB2256) (Sphingomonas alaskensis) protein is Methylenetetrahydrofolate--tRNA-(uracil-5-)-methyltransferase TrmFO.